A 239-amino-acid polypeptide reads, in one-letter code: Large ribosomal subunit protein bL25 (239 aa).

The disordered stretch occupies residues 211–239; that stretch reads KGKKDKEDEEAEKGTSVASPTTATGGTKK. The span at 226-239 shows a compositional bias: polar residues; it reads SVASPTTATGGTKK.

This sequence belongs to the bacterial ribosomal protein bL25 family. CTC subfamily. In terms of assembly, part of the 50S ribosomal subunit; part of the 5S rRNA/L5/L18/L25 subcomplex. Contacts the 5S rRNA. Binds to the 5S rRNA independently of L5 and L18.

Functionally, this is one of the proteins that binds to the 5S RNA in the ribosome where it forms part of the central protuberance. The polypeptide is Large ribosomal subunit protein bL25 (Endomicrobium trichonymphae).